Consider the following 128-residue polypeptide: Hemoglobin subunit beta-1 (128 aa).

The 127-residue stretch at 2–128 (HWTAEEKALV…VVDALSKGYH (127 aa)) folds into the Globin domain. The heme b site is built by His-51 and His-74.

It belongs to the globin family. Hb 1 is a heterotetramer of two alpha and two beta-1 chains. In terms of tissue distribution, red blood cells (at protein level).

In terms of biological role, involved in oxygen transport from gills to the various peripheral tissues. This is Hemoglobin subunit beta-1 from Somniosus microcephalus (Greenland sleeper shark).